The sequence spans 320 residues: Undecaprenyl-diphosphatase (320 aa).

The next 8 helical transmembrane spans lie at 9–29 (FVLI…LEVF), 82–102 (GVAF…WYFW), 130–150 (LGIV…KTFI), 161–181 (LGAI…GEKL), 191–211 (LTMQ…IPGV), 236–256 (FLLG…DLLA), 265–285 (LPLI…IAGL), and 296–316 (VFIW…SAGI).

It belongs to the UppP family.

The protein localises to the cell inner membrane. The catalysed reaction is di-trans,octa-cis-undecaprenyl diphosphate + H2O = di-trans,octa-cis-undecaprenyl phosphate + phosphate + H(+). Functionally, catalyzes the dephosphorylation of undecaprenyl diphosphate (UPP). Confers resistance to bacitracin. The polypeptide is Undecaprenyl-diphosphatase (Nostoc sp. (strain PCC 7120 / SAG 25.82 / UTEX 2576)).